A 457-amino-acid polypeptide reads, in one-letter code: Cyanidin 3-O-galactoside 2''-O-xylosyltransferase FGGT1 (457 aa).

It belongs to the UDP-glycosyltransferase family. Expressed in ovaries.

It carries out the reaction cyanidin 3-O-beta-D-galactoside + UDP-alpha-D-xylose = cyanidin 3-O-[beta-D-xylosyl-(1-&gt;2)-beta-D-galactoside] + UDP + H(+). Its pathway is pigment biosynthesis; anthocyanin biosynthesis. Functionally, xylosyltransferase involved in anthocyanin biosynthesis by catalyzing the xylosylation of cyanidin 3-O-galactoside to form cyanidin 3-O-[2-O-(-xylosyl)-galactoside]. Required for the accumulation of anthocyanin in red-fleshed kiwifruit varieties. The polypeptide is Cyanidin 3-O-galactoside 2''-O-xylosyltransferase FGGT1 (Actinidia chinensis var. chinensis (Chinese soft-hair kiwi)).